A 347-amino-acid chain; its full sequence is Protein N-terminal asparagine amidohydrolase (347 aa).

The catalysed reaction is N-terminal L-asparaginyl-[protein] + H2O + H(+) = N-terminal L-aspartyl-[protein] + NH4(+). Its function is as follows. N-terminal asparagine deamidase that mediates deamidation of N-terminal asparagine residues to aspartate. Required for the ubiquitin-dependent turnover of intracellular proteins that initiate with Met-Asn. These proteins are acetylated on the retained initiator methionine and can subsequently be modified by the removal of N-acetyl methionine by acylaminoacid hydrolase (AAH). Conversion of the resulting N-terminal asparagine to aspartate by NTAN1 renders the protein susceptible to arginylation, polyubiquitination and degradation as specified by the N-end rule. This enzyme does not act on substrates with internal or C-terminal asparagines and does not act on glutamine residues in any position. Does not seem to be involved in immune response, unlike the N-terminal glutamine amidohydrolase NTAQ1. The sequence is that of Protein N-terminal asparagine amidohydrolase from Arabidopsis thaliana (Mouse-ear cress).